The sequence spans 122 residues: Large ribosomal subunit protein uL14 (122 aa).

This sequence belongs to the universal ribosomal protein uL14 family. Part of the 50S ribosomal subunit. Forms a cluster with proteins L3 and L19. In the 70S ribosome, L14 and L19 interact and together make contacts with the 16S rRNA in bridges B5 and B8.

Binds to 23S rRNA. Forms part of two intersubunit bridges in the 70S ribosome. The chain is Large ribosomal subunit protein uL14 from Enterococcus faecalis (strain ATCC 700802 / V583).